A 262-amino-acid chain; its full sequence is High-affinity zinc uptake system membrane protein ZnuB (262 aa).

The next 7 membrane-spanning stretches (helical) occupy residues 8–28, 54–74, 84–104, 129–149, 179–199, 215–235, and 238–254; these read GWLAGVLLSLTTGPLGSFIVW, INSFYAILILMSFIAIILAWL, TVLNIISHSSLSLGMVFISLI, ITISISSILILSILLFRWHSI, FTIAIAIKFVGALLITSLLII, VIIAIIVSILSVTGGISLSVF, and TPASPSIVLCSSFLCLI.

This sequence belongs to the ABC-3 integral membrane protein family.

Its subcellular location is the cell membrane. In terms of biological role, involved in the high-affinity zinc uptake transport system. The chain is High-affinity zinc uptake system membrane protein ZnuB (znuB) from Buchnera aphidicola subsp. Acyrthosiphon pisum (strain APS) (Acyrthosiphon pisum symbiotic bacterium).